The following is a 535-amino-acid chain: 2-isopropylmalate synthase (535 aa).

The 262-residue stretch at 13–274 (VLIFDTTLRD…YFNPFLGRPP (262 aa)) folds into the Pyruvate carboxyltransferase domain. Residues Asp22, His213, His215, and Asn249 each coordinate Mn(2+). The tract at residues 414 to 535 (QLEFVQVSCG…LEQRALHPQA (122 aa)) is regulatory domain.

Belongs to the alpha-IPM synthase/homocitrate synthase family. LeuA type 1 subfamily. As to quaternary structure, homodimer. It depends on Mn(2+) as a cofactor.

Its subcellular location is the cytoplasm. The catalysed reaction is 3-methyl-2-oxobutanoate + acetyl-CoA + H2O = (2S)-2-isopropylmalate + CoA + H(+). It functions in the pathway amino-acid biosynthesis; L-leucine biosynthesis; L-leucine from 3-methyl-2-oxobutanoate: step 1/4. Functionally, catalyzes the condensation of the acetyl group of acetyl-CoA with 3-methyl-2-oxobutanoate (2-ketoisovalerate) to form 3-carboxy-3-hydroxy-4-methylpentanoate (2-isopropylmalate). The sequence is that of 2-isopropylmalate synthase from Thermosynechococcus vestitus (strain NIES-2133 / IAM M-273 / BP-1).